We begin with the raw amino-acid sequence, 236 residues long: Uridylate kinase (236 aa).

9–12 (KISG) provides a ligand contact to ATP. A UMP-binding site is contributed by glycine 51. ATP-binding residues include glycine 52 and arginine 56. Residues aspartate 71 and 132–139 (TGNSHFTT) contribute to the UMP site. Tyrosine 166 and aspartate 169 together coordinate ATP.

Belongs to the UMP kinase family. In terms of assembly, homohexamer.

It localises to the cytoplasm. It catalyses the reaction UMP + ATP = UDP + ADP. It functions in the pathway pyrimidine metabolism; CTP biosynthesis via de novo pathway; UDP from UMP (UMPK route): step 1/1. Its activity is regulated as follows. Inhibited by UTP. Functionally, catalyzes the reversible phosphorylation of UMP to UDP. This is Uridylate kinase from Mycoplasmoides gallisepticum (strain R(low / passage 15 / clone 2)) (Mycoplasma gallisepticum).